The sequence spans 368 residues: Phospho-N-acetylmuramoyl-pentapeptide-transferase (368 aa).

The next 10 helical transmembrane spans lie at 2–22 (IALI…TPLL), 51–71 (TLGG…SALY), 80–100 (PTWA…LGFI), 116–136 (VGGK…LALI), 166–186 (IVAI…WTNA), 193–213 (LDGL…IIAM), 234–254 (PLDL…FLWY), 256–276 (CNPA…GLFA), 277–297 (ALSI…LFVV), and 340–360 (FWIV…GNWV).

Belongs to the glycosyltransferase 4 family. MraY subfamily. Mg(2+) is required as a cofactor.

It is found in the cell membrane. The catalysed reaction is UDP-N-acetyl-alpha-D-muramoyl-L-alanyl-gamma-D-glutamyl-meso-2,6-diaminopimeloyl-D-alanyl-D-alanine + di-trans,octa-cis-undecaprenyl phosphate = di-trans,octa-cis-undecaprenyl diphospho-N-acetyl-alpha-D-muramoyl-L-alanyl-D-glutamyl-meso-2,6-diaminopimeloyl-D-alanyl-D-alanine + UMP. It participates in cell wall biogenesis; peptidoglycan biosynthesis. Functionally, catalyzes the initial step of the lipid cycle reactions in the biosynthesis of the cell wall peptidoglycan: transfers peptidoglycan precursor phospho-MurNAc-pentapeptide from UDP-MurNAc-pentapeptide onto the lipid carrier undecaprenyl phosphate, yielding undecaprenyl-pyrophosphoryl-MurNAc-pentapeptide, known as lipid I. This is Phospho-N-acetylmuramoyl-pentapeptide-transferase from Bifidobacterium animalis subsp. lactis (strain AD011).